A 457-amino-acid chain; its full sequence is Siroheme synthase (457 aa).

The interval Met1 to Thr204 is precorrin-2 dehydrogenase /sirohydrochlorin ferrochelatase. Residues Asp22–Val23 and Leu43–Ala44 each bind NAD(+). Ser128 carries the phosphoserine modification. The tract at residues Gly216–His457 is uroporphyrinogen-III C-methyltransferase. Pro225 lines the S-adenosyl-L-methionine pocket. The Proton acceptor role is filled by Asp248. Catalysis depends on Lys270, which acts as the Proton donor. Residues Gly301–Asp303, Ile306, Thr331–Ala332, Met382, and Gly411 each bind S-adenosyl-L-methionine.

This sequence in the N-terminal section; belongs to the precorrin-2 dehydrogenase / sirohydrochlorin ferrochelatase family. The protein in the C-terminal section; belongs to the precorrin methyltransferase family.

The enzyme catalyses uroporphyrinogen III + 2 S-adenosyl-L-methionine = precorrin-2 + 2 S-adenosyl-L-homocysteine + H(+). It carries out the reaction precorrin-2 + NAD(+) = sirohydrochlorin + NADH + 2 H(+). The catalysed reaction is siroheme + 2 H(+) = sirohydrochlorin + Fe(2+). Its pathway is cofactor biosynthesis; adenosylcobalamin biosynthesis; precorrin-2 from uroporphyrinogen III: step 1/1. It participates in cofactor biosynthesis; adenosylcobalamin biosynthesis; sirohydrochlorin from precorrin-2: step 1/1. The protein operates within porphyrin-containing compound metabolism; siroheme biosynthesis; precorrin-2 from uroporphyrinogen III: step 1/1. It functions in the pathway porphyrin-containing compound metabolism; siroheme biosynthesis; siroheme from sirohydrochlorin: step 1/1. Its pathway is porphyrin-containing compound metabolism; siroheme biosynthesis; sirohydrochlorin from precorrin-2: step 1/1. Functionally, multifunctional enzyme that catalyzes the SAM-dependent methylations of uroporphyrinogen III at position C-2 and C-7 to form precorrin-2 via precorrin-1. Then it catalyzes the NAD-dependent ring dehydrogenation of precorrin-2 to yield sirohydrochlorin. Finally, it catalyzes the ferrochelation of sirohydrochlorin to yield siroheme. The sequence is that of Siroheme synthase from Shigella dysenteriae serotype 1 (strain Sd197).